We begin with the raw amino-acid sequence, 214 residues long: Uracil phosphoribosyltransferase (214 aa).

5-phospho-alpha-D-ribose 1-diphosphate is bound by residues Arg-81, Arg-106, and 133 to 141 (DPMLATGNS). Residues Ile-196 and 201–203 (GDA) each bind uracil. Asp-202 lines the 5-phospho-alpha-D-ribose 1-diphosphate pocket.

This sequence belongs to the UPRTase family. The cofactor is Mg(2+).

The catalysed reaction is UMP + diphosphate = 5-phospho-alpha-D-ribose 1-diphosphate + uracil. It participates in pyrimidine metabolism; UMP biosynthesis via salvage pathway; UMP from uracil: step 1/1. Allosterically activated by GTP. Catalyzes the conversion of uracil and 5-phospho-alpha-D-ribose 1-diphosphate (PRPP) to UMP and diphosphate. The protein is Uracil phosphoribosyltransferase of Legionella pneumophila subsp. pneumophila (strain Philadelphia 1 / ATCC 33152 / DSM 7513).